The chain runs to 112 residues: cAMP-regulated phosphoprotein 19 (112 aa).

Positions 1–11 (MSAESPEPASA) are enriched in low complexity. A disordered region spans residues 1 to 48 (MSAESPEPASAEEQKEMEDKVISPEKAEEAKLKARYPHLGQKPGGSDF). At Ser-2 the chain carries N-acetylserine. Residues 12–32 (EEQKEMEDKVISPEKAEEAKL) are compositionally biased toward basic and acidic residues. Phosphoserine; by GWL occurs at positions 62 and 104. Residues 73-112 (KNKQLPTAAPDKTEVTGDHIPTPQDLPQRKPSLVASKLAG) form a disordered region. Ser-104 carries the phosphoserine; by PKA modification.

It belongs to the endosulfine family. As to quaternary structure, interacts (when phosphorylated at Ser-62) with PPP2R2D. Phosphorylation at Ser-62 by MASTL/GWL during mitosis is essential for interaction with PPP2R2D (PR55-delta) and subsequent inactivation of PP2A.

Its subcellular location is the cytoplasm. In terms of biological role, protein phosphatase inhibitor that specifically inhibits protein phosphatase 2A (PP2A) during mitosis. Inhibition of PP2A is enhanced when ARPP19 is phosphorylated. When phosphorylated at Ser-62 during mitosis, specifically interacts with PPP2R2D (PR55-delta) and inhibits its activity, leading to inactivation of PP2A, an essential condition to keep cyclin-B1-CDK1 activity high during M phase. This is cAMP-regulated phosphoprotein 19 (ARPP19) from Gallus gallus (Chicken).